The sequence spans 1478 residues: Adhesion G protein-coupled receptor L2 (1478 aa).

Residues 1–25 (MVSSGCRMRSLWFIIIISFLPNTEG) form the signal peptide. At 26 to 855 (FSRAALPFGL…VHELLLTVIT (830 aa)) the chain is on the extracellular side. The SUEL-type lectin domain occupies 41-130 (SCEGYSIDLR…KYLEVQYECV (90 aa)). Asn99 carries an N-linked (GlcNAc...) asparagine glycan. One can recognise an Olfactomedin-like domain in the interval 139–398 (VCPGTLKAIV…ILRYSLEFGP (260 aa)). Cys140 and Cys322 are oxidised to a cystine. Residue Asn335 is glycosylated (N-linked (GlcNAc...) asparagine). A disordered region spans residues 422–458 (VSTTSTTSQKGPMSTTVAGSQEGSKGTKAPPAVSTTK). Over residues 430–445 (QKGPMSTTVAGSQEGS) the composition is skewed to polar residues. N-linked (GlcNAc...) asparagine glycans are attached at residues Asn524, Asn633, Asn735, Asn748, Asn791, Asn796, and Asn817. The region spanning 663–841 (TRVSMPTENI…AILMAHREIA (179 aa)) is the GAIN-B domain. Disulfide bonds link Cys792–Cys823 and Cys811–Cys825. Residues 792–841 (CSFWNYSERTMMGYWSTQGCKLVDTNKTRTTCACSHLTNFAILMAHREIA) are GPS. A helical transmembrane segment spans residues 856–876 (WVGIVISLVCLAICIFTFCFF). Residues 877–884 (RGLQSDRN) lie on the Cytoplasmic side of the membrane. The chain crosses the membrane as a helical span at residues 885–905 (TIHKNLCINLFIAEFIFLIGI). Topologically, residues 906–911 (DKTKYM) are extracellular. Residues 912 to 932 (IACPIFAGLLHFFFLAAFAWM) traverse the membrane as a helical segment. Over 933–955 (CLEGVQLYLMLVEVFESEYSRKK) the chain is Cytoplasmic. The chain crosses the membrane as a helical span at residues 956 to 976 (YYYVAGYLFPATVVGVSAAID). Topologically, residues 977 to 994 (YKSYGTEKACWLHVDNYF) are extracellular. A helical membrane pass occupies residues 995–1015 (IWSFIGPVTFIILLNIIFLVI). Residues 1016–1056 (TLCKMVKHSNTLKPDSSRLENINNYRVCDGYYNTDLPGSWV) lie on the Cytoplasmic side of the membrane. A helical transmembrane segment spans residues 1057 to 1077 (LGAFALLCLLGLTWSFGLLFI). The Extracellular segment spans residues 1078–1081 (NEET). Residues 1082 to 1102 (IVMAYLFTIFNAFQGVFIFIF) traverse the membrane as a helical segment. Residues 1103 to 1478 (HCALQKKVRK…EGQMQLVTSL (376 aa)) are Cytoplasmic-facing. The segment at 1378-1419 (AEDHLQSPNRDSLYTSMPNLRDSPYQESSPDMEEDLSPSRRS) is disordered. The span at 1383-1395 (QSPNRDSLYTSMP) shows a compositional bias: polar residues. Ser1393, Ser1428, and Ser1449 each carry phosphoserine.

Belongs to the G-protein coupled receptor 2 family. Adhesion G-protein coupled receptor (ADGR) subfamily. In terms of assembly, heterodimer of 2 chains generated by proteolytic processing; the large extracellular N-terminal fragment and the membrane-bound C-terminal fragment predominantly remain associated and non-covalently linked. Autoproteolytically processed at the GPS region of the GAIN-B domain; this cleavage modulates receptor activity. As to expression, ubiquitously expressed.

Its subcellular location is the postsynaptic cell membrane. Forms a heterodimer of 2 chains generated by proteolytic processing that remain associated through non-covalent interactions mediated by the GAIN-B domain. In the inactivated receptor, the Stachel sequence (also named stalk) is embedded in the GAIN-B domain, where it adopts a beta-strand conformation. On activation, the Stachel moves into the 7 transmembrane region and adopts a twisted hook-shaped configuration that forms contacts within the receptor, leading to coupling of a G-alpha protein, which activates signaling. The cleaved GAIN-B and N-terminal domains can then dissociate from the rest of the receptor. Its function is as follows. Orphan adhesion G-protein coupled receptor (aGPCR), which mediates synapse specificity. Ligand binding causes a conformation change that triggers signaling via guanine nucleotide-binding proteins (G proteins) and modulates the activity of downstream effectors. Following G-protein coupled receptor activation, associates with cell adhesion molecules that are expressed at the surface of adjacent cells to direct synapse specificity. Specifically mediates the establishment of perforant-path synapses on CA1-region pyramidal neurons in the hippocampus. Localizes to postsynaptic spines in excitatory synapses in the S.lacunosum-moleculare and interacts with presynaptic cell adhesion molecules, such as teneurins, promoting synapse formation. The protein is Adhesion G protein-coupled receptor L2 (ADGRL2) of Bos taurus (Bovine).